The sequence spans 118 residues: Probable small nuclear ribonucleoprotein Sm D2 (118 aa).

The 87-residue stretch at 29–115 folds into the Sm domain; that stretch reads LSILTNSVKN…VILVVKNPLA (87 aa).

Belongs to the snRNP core protein family.

Its subcellular location is the nucleus. It localises to the cytoplasm. It is found in the cytosol. Functionally, plays a role in pre-mRNA splicing as a core component of the spliceosomal U1, U2, U4 and U5 small nuclear ribonucleoproteins (snRNPs), the building blocks of the spliceosome. The sequence is that of Probable small nuclear ribonucleoprotein Sm D2 (snr-4) from Caenorhabditis elegans.